We begin with the raw amino-acid sequence, 1099 residues long: Protein DDB_G0287365 (1099 aa).

The signal sequence occupies residues 1 to 24 (MMSFNLILILIIFLILIQNYVIDG). Residues 47–174 (KSWKKLKLPI…TKTTWTKLIS (128 aa)) form the G8 domain. N-linked (GlcNAc...) asparagine glycans are attached at residues Asn-62, Asn-137, Asn-664, Asn-764, and Asn-858.

It belongs to the CEMIP family.

In Dictyostelium discoideum (Social amoeba), this protein is Protein DDB_G0287365.